A 569-amino-acid polypeptide reads, in one-letter code: Laccase-14 (569 aa).

A signal peptide spans 1–33 (MEFKLNIPNTIIKTLQTIVFFLFVLLAFQIAEA). Plastocyanin-like domains are found at residues 41–157 (KIKS…PKRG) and 167–320 (REIP…YKGD). A glycan (N-linked (GlcNAc...) asparagine) is linked at N87. H91, H93, H136, and H138 together coordinate Cu cation. N-linked (GlcNAc...) asparagine glycans are attached at residues N190, N249, N336, N374, N395, N430, and N452. One can recognise a Plastocyanin-like 3 domain in the interval 420–553 (DFPRNPPTKF…NTVFIVKDGP (134 aa)). Residues H470, H473, H475, H532, C533, H534, H538, and M543 each coordinate Cu cation.

This sequence belongs to the multicopper oxidase family. Cu cation serves as cofactor. In terms of tissue distribution, expressed at low levels in flowers and siliques.

Its subcellular location is the secreted. It localises to the extracellular space. The protein resides in the apoplast. The catalysed reaction is 4 hydroquinone + O2 = 4 benzosemiquinone + 2 H2O. Its function is as follows. Lignin degradation and detoxification of lignin-derived products. This Arabidopsis thaliana (Mouse-ear cress) protein is Laccase-14 (LAC14).